Reading from the N-terminus, the 639-residue chain is Extracellular metalloproteinase mep (639 aa).

Residues 1–16 form the signal peptide; it reads MHMLSFIGALALPVFV. The propeptide occupies 17-245; sequence CAQSCEPASL…IHGVVDYISE (229 aa). Residues N287, N320, N336, and N368 are each glycosylated (N-linked (GlcNAc...) asparagine). Residue H429 participates in Zn(2+) binding. The active site involves E430. H433 is a binding site for Zn(2+). N-linked (GlcNAc...) asparagine glycosylation is present at N509.

The protein belongs to the peptidase M36 family. The cofactor is Zn(2+).

It localises to the secreted. Its function is as follows. Secreted metalloproteinase that allows assimilation of proteinaceous substrates. In Aspergillus flavus (strain ATCC 200026 / FGSC A1120 / IAM 13836 / NRRL 3357 / JCM 12722 / SRRC 167), this protein is Extracellular metalloproteinase mep (mep).